The following is a 207-amino-acid chain: Interleukin-6 (207 aa).

Positions 1–20 (MNSLSTSAFSLGLLLVMATA) are cleaved as a signal peptide. Cysteines 67 and 73 form a disulfide. The residue at position 76 (S76) is a Phosphoserine. A disulfide bond links C96 and C106.

The protein belongs to the IL-6 superfamily. Component of a hexamer of two molecules each of IL6, IL6R and IL6ST; first binds to IL6R to associate with the signaling subunit IL6ST. Interacts with IL6R (via the N-terminal ectodomain); this interaction may be affected by IL6R-binding with SORL1, hence decreasing IL6 cis signaling. Interacts with SORL1 (via the N-terminal ectodomain); this interaction leads to IL6 internalization and lysosomal degradation. May form a trimeric complex with the soluble SORL1 ectodomain and soluble IL6R receptor; this interaction might stabilize circulating IL6, hence promoting IL6 trans signaling.

It is found in the secreted. In terms of biological role, cytokine with a wide variety of biological functions in immunity, tissue regeneration, and metabolism. Binds to IL6R, then the complex associates to the signaling subunit IL6ST/gp130 to trigger the intracellular IL6-signaling pathway. The interaction with the membrane-bound IL6R and IL6ST stimulates 'classic signaling', whereas the binding of IL6 and soluble IL6R to IL6ST stimulates 'trans-signaling'. Alternatively, 'cluster signaling' occurs when membrane-bound IL6:IL6R complexes on transmitter cells activate IL6ST receptors on neighboring receiver cells. Its function is as follows. IL6 is a potent inducer of the acute phase response. Rapid production of IL6 contributes to host defense during infection and tissue injury, but excessive IL6 synthesis is involved in disease pathology. In the innate immune response, is synthesized by myeloid cells, such as macrophages and dendritic cells, upon recognition of pathogens through toll-like receptors (TLRs) at the site of infection or tissue injury. In the adaptive immune response, is required for the differentiation of B cells into immunoglobulin-secreting cells. Plays a major role in the differentiation of CD4(+) T cell subsets. Essential factor for the development of T follicular helper (Tfh) cells that are required for the induction of germinal-center formation. Required to drive naive CD4(+) T cells to the Th17 lineage. Also required for proliferation of myeloma cells and the survival of plasmablast cells. Functionally, acts as an essential factor in bone homeostasis and on vessels directly or indirectly by induction of VEGF, resulting in increased angiogenesis activity and vascular permeability. Induces, through 'trans-signaling' and synergistically with IL1B and TNF, the production of VEGF. Involved in metabolic controls, is discharged into the bloodstream after muscle contraction increasing lipolysis and improving insulin resistance. 'Trans-signaling' in central nervous system also regulates energy and glucose homeostasis. Mediates, through GLP-1, crosstalk between insulin-sensitive tissues, intestinal L cells and pancreatic islets to adapt to changes in insulin demand. Also acts as a myokine. Plays a protective role during liver injury, being required for maintenance of tissue regeneration. Also has a pivotal role in iron metabolism by regulating HAMP/hepcidin expression upon inflammation or bacterial infection. Through activation of IL6ST-YAP-NOTCH pathway, induces inflammation-induced epithelial regeneration. This is Interleukin-6 (IL6) from Vulpes vulpes (Red fox).